A 372-amino-acid chain; its full sequence is Glutamate 5-kinase (372 aa).

An ATP-binding site is contributed by Lys14. Positions 54, 141, and 153 each coordinate substrate. Thr173–Asp174 provides a ligand contact to ATP. Residues Arg280–Ile358 enclose the PUA domain.

Belongs to the glutamate 5-kinase family.

It is found in the cytoplasm. It carries out the reaction L-glutamate + ATP = L-glutamyl 5-phosphate + ADP. Its pathway is amino-acid biosynthesis; L-proline biosynthesis; L-glutamate 5-semialdehyde from L-glutamate: step 1/2. Catalyzes the transfer of a phosphate group to glutamate to form L-glutamate 5-phosphate. In Nitrosospira multiformis (strain ATCC 25196 / NCIMB 11849 / C 71), this protein is Glutamate 5-kinase.